A 482-amino-acid chain; its full sequence is F-box/LRR-repeat protein At3g58930 (482 aa).

The F-box domain occupies 1 to 47 (MDRVSNLPDGVRGHILSFLPAKHIALTSVLSKSWLNLWKLIPILDID). LRR repeat units lie at residues 122–150 (SYEDTQEDEDMLPQEMFVSKTLVKLKIRN), 175–200 (SDLILWGKMKRFLSSFPVLEELRMAS), 222–248 (GTGCEDYVNPKSISFDTPSLLYLNYSD), 313–344 (ILYLTADTLEVLSLCCESMPVFNNLKTLGIKS), and 345–370 (EEGRGWQAVPALLRNCPHLEYLIIEG).

This Arabidopsis thaliana (Mouse-ear cress) protein is F-box/LRR-repeat protein At3g58930.